The primary structure comprises 38 residues: Photosystem II reaction center protein L (38 aa).

The chain crosses the membrane as a helical span at residues 17–37 (SLYWGLLLIFVLAVSFSNYFF).

The protein belongs to the PsbL family. PSII is composed of 1 copy each of membrane proteins PsbA, PsbB, PsbC, PsbD, PsbE, PsbF, PsbH, PsbI, PsbJ, PsbK, PsbL, PsbM, PsbT, PsbX, PsbY, PsbZ, Psb30/Ycf12, at least 3 peripheral proteins of the oxygen-evolving complex and a large number of cofactors. It forms dimeric complexes.

The protein localises to the plastid. It is found in the chloroplast thylakoid membrane. One of the components of the core complex of photosystem II (PSII). PSII is a light-driven water:plastoquinone oxidoreductase that uses light energy to abstract electrons from H(2)O, generating O(2) and a proton gradient subsequently used for ATP formation. It consists of a core antenna complex that captures photons, and an electron transfer chain that converts photonic excitation into a charge separation. This subunit is found at the monomer-monomer interface and is required for correct PSII assembly and/or dimerization. This Amborella trichopoda protein is Photosystem II reaction center protein L.